The chain runs to 43 residues: Holotricin-1 (43 aa).

Intrachain disulfides connect C3–C34, C20–C39, and C24–C41.

It belongs to the invertebrate defensin family. Type 1 subfamily. As to expression, hemolymph.

Its subcellular location is the secreted. In terms of biological role, shows potent antibacterial activity against Gram-positive bacteria. The protein is Holotricin-1 of Holotrichia diomphalia (Korean black chafer).